The chain runs to 343 residues: Tetraacyldisaccharide 4'-kinase (343 aa).

61–68 provides a ligand contact to ATP; the sequence is GVGGNGKT.

It belongs to the LpxK family.

It carries out the reaction a lipid A disaccharide + ATP = a lipid IVA + ADP + H(+). The protein operates within glycolipid biosynthesis; lipid IV(A) biosynthesis; lipid IV(A) from (3R)-3-hydroxytetradecanoyl-[acyl-carrier-protein] and UDP-N-acetyl-alpha-D-glucosamine: step 6/6. Transfers the gamma-phosphate of ATP to the 4'-position of a tetraacyldisaccharide 1-phosphate intermediate (termed DS-1-P) to form tetraacyldisaccharide 1,4'-bis-phosphate (lipid IVA). This Colwellia psychrerythraea (strain 34H / ATCC BAA-681) (Vibrio psychroerythus) protein is Tetraacyldisaccharide 4'-kinase.